Reading from the N-terminus, the 77-residue chain is Probable small nuclear ribonucleoprotein G (77 aa).

The 73-residue stretch at 4–76 (THPPELKKYM…VVIMEPKERI (73 aa)) folds into the Sm domain.

It belongs to the snRNP Sm proteins family. Core component of the spliceosomal U1, U2, U4 and U5 small nuclear ribonucleoproteins (snRNPs), the building blocks of the spliceosome.

It localises to the cytoplasm. It is found in the cytosol. The protein resides in the nucleus. Functionally, plays a role in pre-mRNA splicing as a core component of the spliceosomal U1, U2, U4 and U5 small nuclear ribonucleoproteins (snRNPs), the building blocks of the spliceosome. The sequence is that of Probable small nuclear ribonucleoprotein G (snr-7) from Caenorhabditis elegans.